The chain runs to 300 residues: Acetylglutamate kinase (300 aa).

Residues glycine 68 to glycine 69, arginine 90, and asparagine 195 each bind substrate.

It belongs to the acetylglutamate kinase family. ArgB subfamily.

The protein localises to the cytoplasm. It carries out the reaction N-acetyl-L-glutamate + ATP = N-acetyl-L-glutamyl 5-phosphate + ADP. The protein operates within amino-acid biosynthesis; L-arginine biosynthesis; N(2)-acetyl-L-ornithine from L-glutamate: step 2/4. Functionally, catalyzes the ATP-dependent phosphorylation of N-acetyl-L-glutamate. This is Acetylglutamate kinase from Halorhodospira halophila (strain DSM 244 / SL1) (Ectothiorhodospira halophila (strain DSM 244 / SL1)).